Here is a 702-residue protein sequence, read N- to C-terminus: MA3 DOMAIN-CONTAINING TRANSLATION REGULATORY FACTOR 1 (702 aa).

Residues 39–66 (LNIKSPTGGKGPVAGIPNRHVRRTHSGK) are disordered. Residues 57 to 66 (RHVRRTHSGK) show a composition bias toward basic residues. Residues 122-243 (DYKKSVVSII…PPVFLVRSKK (122 aa)) enclose the MI 1 domain. The short motif at 273-280 (EKKWGGST) is the Nuclear localization signal 1 element. MI domains lie at 286 to 407 (ETKK…TSDQ), 420 to 541 (QYKK…DIST), and 583 to 702 (DAKD…SATQ). The Nuclear localization signal 2 motif lies at 458–465 (LKRLITLA).

This sequence belongs to the PDCD4 family. In terms of assembly, binds to EIF4A1, S6K1 and S6K2. The association with ribosomes is modulated by cellular energy status and TOR activity. In terms of processing, phosphorylation by S6 kinases (e.g. S6K1 and S6K2) is modulated by cellular energy status and TOR activity. As to expression, mostly expressed in vegetative tissues, such as leaves, roots and stems, and, to a lower extent, in reproductive tissues, such as flower buds and flowers.

Its subcellular location is the nucleus. It localises to the cytoplasm. The protein resides in the cytosol. Its function is as follows. Involved in target of rapamycin (TOR)-regulated translation control, especially under energy-deficient conditions. The polypeptide is MA3 DOMAIN-CONTAINING TRANSLATION REGULATORY FACTOR 1 (Arabidopsis thaliana (Mouse-ear cress)).